The primary structure comprises 55 residues: UPF0391 membrane protein Meso_3110 (55 aa).

The next 2 helical transmembrane spans lie at 4–24 (WALV…GGIA) and 30–50 (IAQI…LFGL).

It belongs to the UPF0391 family.

It is found in the cell membrane. The sequence is that of UPF0391 membrane protein Meso_3110 from Chelativorans sp. (strain BNC1).